The primary structure comprises 123 residues: Small ribosomal subunit protein uS12 (123 aa).

Residues 1–27 (MPTIQQLIRKPRQPKIKRSKSMHLQEC) form a disordered region. The span at 9–21 (RKPRQPKIKRSKS) shows a compositional bias: basic residues. Asp-89 bears the 3-methylthioaspartic acid mark.

Belongs to the universal ribosomal protein uS12 family. As to quaternary structure, part of the 30S ribosomal subunit. Contacts proteins S8 and S17. May interact with IF1 in the 30S initiation complex.

With S4 and S5 plays an important role in translational accuracy. Functionally, interacts with and stabilizes bases of the 16S rRNA that are involved in tRNA selection in the A site and with the mRNA backbone. Located at the interface of the 30S and 50S subunits, it traverses the body of the 30S subunit contacting proteins on the other side and probably holding the rRNA structure together. The combined cluster of proteins S8, S12 and S17 appears to hold together the shoulder and platform of the 30S subunit. The polypeptide is Small ribosomal subunit protein uS12 (Roseobacter denitrificans (strain ATCC 33942 / OCh 114) (Erythrobacter sp. (strain OCh 114))).